Reading from the N-terminus, the 214-residue chain is Germin-like protein (214 aa).

Residues 1–22 form the signal peptide; sequence MVMMRIFFFLFLLAFPVFTANA. An intrachain disulfide couples Cys-28 to Cys-44. The Cupin type-1 domain occupies 58 to 204; the sequence is SGLAKPGNTT…TTCLDEATIK (147 aa). Mn(2+) is bound by residues His-106, His-108, and Glu-113.

It belongs to the germin family. In terms of assembly, oligomer (believed to be a pentamer but probably hexamer). As to expression, cotyledons and leaves.

It is found in the secreted. Its subcellular location is the extracellular space. The protein localises to the apoplast. In Ipomoea nil (Japanese morning glory), this protein is Germin-like protein (GLP).